The primary structure comprises 260 residues: Ras-related protein Rab-26 (260 aa).

The disordered stretch occupies residues Met1–Ser56. Residues Ser76, Gly77, Val78, Gly79, Lys80, Thr81, Cys82, Ser99, and Thr100 each contribute to the GTP site. Thr81 provides a ligand contact to Mg(2+). 2 consecutive short sequence motifs (switch) follow at residues Gly90–Phe105 and Asp123–Asp140. Mg(2+) contacts are provided by Thr100 and Asp123. 6 residues coordinate GTP: Gly126, Asn181, Lys182, Asp184, Ala212, and Arg213. 2 S-geranylgeranyl cysteine lipidation sites follow: Cys257 and Cys258.

The protein belongs to the small GTPase superfamily. Rab family. In terms of assembly, interacts with ADRA2B. Interacts with RIMS1. It depends on Mg(2+) as a cofactor. Detected in zymogenic cells in the stomach.

The protein resides in the cytoplasmic vesicle. It localises to the secretory vesicle membrane. It is found in the golgi apparatus membrane. It catalyses the reaction GTP + H2O = GDP + phosphate + H(+). With respect to regulation, regulated by guanine nucleotide exchange factors (GEFs) which promote the exchange of bound GDP for free GTP. Regulated by GTPase activating proteins (GAPs) which increase the GTP hydrolysis activity. Inhibited by GDP dissociation inhibitors (GDIs). Functionally, the small GTPases Rab are key regulators of intracellular membrane trafficking, from the formation of transport vesicles to their fusion with membranes. Rabs cycle between an inactive GDP-bound form and an active GTP-bound form that is able to recruit to membranes different set of downstream effectors directly responsible for vesicle formation, movement, tethering and fusion. RAB26 mediates transport of ADRA2A and ADRA2B from the Golgi to the cell membrane. Plays a role in the maturation of zymogenic granules and in pepsinogen secretion in the stomach. Plays a role in the secretion of amylase from acinar granules in the parotid gland. This Mus musculus (Mouse) protein is Ras-related protein Rab-26.